Reading from the N-terminus, the 143-residue chain is Large ribosomal subunit protein uL13 (143 aa).

Belongs to the universal ribosomal protein uL13 family. As to quaternary structure, part of the 50S ribosomal subunit.

In terms of biological role, this protein is one of the early assembly proteins of the 50S ribosomal subunit, although it is not seen to bind rRNA by itself. It is important during the early stages of 50S assembly. This chain is Large ribosomal subunit protein uL13, found in Thermoanaerobacter pseudethanolicus (strain ATCC 33223 / 39E) (Clostridium thermohydrosulfuricum).